A 380-amino-acid chain; its full sequence is Ubiquitin-like protein 7 (380 aa).

One can recognise a Ubiquitin-like domain in the interval 18-98 (APKSILQLPE…VLRKSWPEPD (81 aa)). The tract at residues 200–313 (TPMPGADSSS…SSGVQSGTPI (114 aa)) is disordered. Positions 206–221 (DSSSRSMPSSSYRDMP) are enriched in low complexity. S230 carries the phosphoserine modification. 2 stretches are compositionally biased toward low complexity: residues 239-253 (STRS…SSRP) and 270-293 (SELA…TPGT). A compositionally biased stretch (polar residues) spans 294–313 (QGHSSGTSPMSSGVQSGTPI). One can recognise a UBA domain in the interval 333–377 (SLQIQWQPQLQQLRDMGIQDDELSLRALQATGGDIQAALELIFAG).

Binds ubiquitin. Interacts with MAVS; this interaction enhances TRIM21-dependent 'Lys-27'-linked polyubiquitination of MAVS. Post-translationally, deubiquitinated by OTUD4 which stabilizes UBL7 expression.

Its function is as follows. Interferon-stimulated protein that positively regulates RNA virus-triggered innate immune signaling. Mechanistically, promotes 'Lys-27'-linked polyubiquitination of MAVS through TRIM21 leading to enhanced the IFN signaling pathway. The chain is Ubiquitin-like protein 7 (Ubl7) from Mus musculus (Mouse).